The chain runs to 32 residues: Photosystem II reaction center protein T (32 aa).

The chain crosses the membrane as a helical span at residues 3-23; it reads ALVYVFLLIGTLMIIFFAIFF.

Belongs to the PsbT family. In terms of assembly, PSII is composed of 1 copy each of membrane proteins PsbA, PsbB, PsbC, PsbD, PsbE, PsbF, PsbH, PsbI, PsbJ, PsbK, PsbL, PsbM, PsbT, PsbY, PsbZ, Psb30/Ycf12, at least 3 peripheral proteins of the oxygen-evolving complex and a large number of cofactors. It forms dimeric complexes.

The protein localises to the plastid. The protein resides in the chloroplast thylakoid membrane. Functionally, found at the monomer-monomer interface of the photosystem II (PS II) dimer, plays a role in assembly and dimerization of PSII. PSII is a light-driven water plastoquinone oxidoreductase, using light energy to abstract electrons from H(2)O, generating a proton gradient subsequently used for ATP formation. The protein is Photosystem II reaction center protein T of Cyanidioschyzon merolae (strain NIES-3377 / 10D) (Unicellular red alga).